The following is a 226-amino-acid chain: Calcium-binding protein 1 (226 aa).

Gly2 carries N-myristoyl glycine lipidation. Cys4 carries S-palmitoyl cysteine lipidation. EF-hand domains are found at residues 81–116, 135–152, 158–193, and 195–226; these read EEIE…MGYM, GHVD…KLLA, IGVK…LLGH, and VGHR…MMSR. Ca(2+) contacts are provided by Asp94, Asp96, Asp98, Tyr100, and Asp105. Residues Asp171, Asn173, Asp175, and Glu177 each contribute to the Ca(2+) site. Ser179 is modified (phosphoserine). Residues Glu182, Asp208, Asn210, Asp212, Arg214, and Glu219 each coordinate Ca(2+).

As to quaternary structure, homodimer. Interacts (via C-terminus) with ITPR1, ITPR2 and ITPR3. This binding is calcium dependent and the interaction correlates with calcium concentration. An additional calcium-independent interaction with the N-terminus of ITPR1 results in a decreased InsP(3) binding to the receptor. Interacts with CACNA1A (via C-terminal CDB motif) in the pre- and postsynaptic membranes. Interacts with CACNA1C (via C-terminal C and IQ motifs). Interacts with CACNA1D. The binding to the C motif is calcium independent whereas the binding to IQ requires the presence of calcium and is mutually exclusive with calmodulin binding. Interacts with TRPC5 (via C-terminus). Interacts (via EF-hands 1 and 2) at microtubules with MAP1LC3B. Interacts with MYO1C. Interacts (via EF-hands 1 and 2) with NSMF (via the central NLS-containing motif region), the interaction occurs in a calcium dependent manner after synaptic NMDA receptor stimulation and prevents nuclear import of NSMF. Interacts with SPACA9. Post-translationally, phosphorylated. The phosphorylation regulates the activity.

It localises to the cytoplasm. The protein resides in the cytoskeleton. It is found in the perinuclear region. Its subcellular location is the cell membrane. The protein localises to the golgi apparatus. It localises to the postsynaptic density. Functionally, modulates calcium-dependent activity of inositol 1,4,5-triphosphate receptors (ITPRs). Inhibits agonist-induced intracellular calcium signaling. Enhances inactivation and does not support calcium-dependent facilitation of voltage-dependent P/Q-type calcium channels. Causes calcium-dependent facilitation and inhibits inactivation of L-type calcium channels by binding to the same sites as calmodulin in the C-terminal domain of CACNA1C, but has an opposite effect on channel function. Suppresses the calcium-dependent inactivation of CACNA1D. Inhibits TRPC5 channels. Prevents NMDA receptor-induced cellular degeneration. Required for the normal transfer of light signals through the retina. This Bos taurus (Bovine) protein is Calcium-binding protein 1 (CABP1).